Consider the following 197-residue polypeptide: HTH-type transcriptional repressor BdcR (197 aa).

Positions 15-75 (RFAPEQAISA…RVLNEYVGTE (61 aa)) constitute an HTH tetR-type domain. A DNA-binding region (H-T-H motif) is located at residues 38–57 (SVAEVTDYLGINPPSLYAAF).

Negatively regulates expression of bdcA. The sequence is that of HTH-type transcriptional repressor BdcR (bdcR) from Escherichia coli (strain K12).